Here is a 598-residue protein sequence, read N- to C-terminus: Arginine--tRNA ligase (598 aa).

The short motif at 139-149 (ANPTGPMHVGH) is the 'HIGH' region element.

This sequence belongs to the class-I aminoacyl-tRNA synthetase family. In terms of assembly, monomer.

The protein localises to the cytoplasm. It carries out the reaction tRNA(Arg) + L-arginine + ATP = L-arginyl-tRNA(Arg) + AMP + diphosphate. The protein is Arginine--tRNA ligase of Bradyrhizobium sp. (strain ORS 278).